The following is a 696-amino-acid chain: Probable transporter efuK (696 aa).

A disordered region spans residues 603–642 (SLNGGKMQGASDAKSKVEQGQRAMRKQDEQNGSKWEPVFF). The span at 615–633 (AKSKVEQGQRAMRKQDEQN) shows a compositional bias: basic and acidic residues.

Belongs to the OSBP family.

In terms of biological role, probable transporter; part of the gene cluster that mediates the biosynthesis of enfumafungin, a glycosylated fernene-type triterpenoid with potent antifungal activity, mediated by its interaction with beta-1,3-glucan synthase and the fungal cell wall. Might be involved in transport of enfumafungin to and across organelle membranes. The polypeptide is Probable transporter efuK (Hormonema carpetanum).